Here is a 391-residue protein sequence, read N- to C-terminus: 1-deoxy-D-xylulose 5-phosphate reductoisomerase (391 aa).

NADPH is bound by residues threonine 17, glycine 18, serine 19, isoleucine 20, asparagine 47, and asparagine 130. Position 131 (lysine 131) interacts with 1-deoxy-D-xylulose 5-phosphate. Glutamate 132 provides a ligand contact to NADPH. Aspartate 156 contributes to the Mn(2+) binding site. Serine 157, glutamate 158, serine 182, and histidine 205 together coordinate 1-deoxy-D-xylulose 5-phosphate. Glutamate 158 contacts Mn(2+). Glycine 211 contributes to the NADPH binding site. 1-deoxy-D-xylulose 5-phosphate contacts are provided by serine 218, asparagine 223, lysine 224, and glutamate 227. Glutamate 227 is a Mn(2+) binding site.

This sequence belongs to the DXR family. Mg(2+) serves as cofactor. The cofactor is Mn(2+).

The enzyme catalyses 2-C-methyl-D-erythritol 4-phosphate + NADP(+) = 1-deoxy-D-xylulose 5-phosphate + NADPH + H(+). It functions in the pathway isoprenoid biosynthesis; isopentenyl diphosphate biosynthesis via DXP pathway; isopentenyl diphosphate from 1-deoxy-D-xylulose 5-phosphate: step 1/6. In terms of biological role, catalyzes the NADPH-dependent rearrangement and reduction of 1-deoxy-D-xylulose-5-phosphate (DXP) to 2-C-methyl-D-erythritol 4-phosphate (MEP). This is 1-deoxy-D-xylulose 5-phosphate reductoisomerase from Sinorhizobium fredii (strain NBRC 101917 / NGR234).